A 150-amino-acid polypeptide reads, in one-letter code: Large ribosomal subunit protein bL9 (150 aa).

The protein belongs to the bacterial ribosomal protein bL9 family.

Its function is as follows. Binds to the 23S rRNA. The protein is Large ribosomal subunit protein bL9 of Burkholderia cenocepacia (strain HI2424).